The sequence spans 551 residues: CTP synthase (551 aa).

The tract at residues 1–273 (MKNTTNTKRT…DSKILELLNI (273 aa)) is amidoligase domain. Residue Ser-21 participates in CTP binding. Ser-21 lines the UTP pocket. Residues 22 to 27 (SLGKGL) and Asp-79 each bind ATP. Positions 79 and 147 each coordinate Mg(2+). CTP contacts are provided by residues 154 to 156 (DIE), 194 to 199 (KTKPTQ), and Lys-230. UTP contacts are provided by residues 194-199 (KTKPTQ) and Lys-230. Positions 298–551 (TIAITGKYVD…ISAAVANKKG (254 aa)) constitute a Glutamine amidotransferase type-1 domain. Residue Gly-360 coordinates L-glutamine. Cys-387 functions as the Nucleophile; for glutamine hydrolysis in the catalytic mechanism. Residues 388 to 391 (LGMQ), Glu-411, and Arg-479 contribute to the L-glutamine site. Active-site residues include His-524 and Glu-526.

This sequence belongs to the CTP synthase family. Homotetramer.

The enzyme catalyses UTP + L-glutamine + ATP + H2O = CTP + L-glutamate + ADP + phosphate + 2 H(+). The catalysed reaction is L-glutamine + H2O = L-glutamate + NH4(+). It catalyses the reaction UTP + NH4(+) + ATP = CTP + ADP + phosphate + 2 H(+). It participates in pyrimidine metabolism; CTP biosynthesis via de novo pathway; CTP from UDP: step 2/2. With respect to regulation, allosterically activated by GTP, when glutamine is the substrate; GTP has no effect on the reaction when ammonia is the substrate. The allosteric effector GTP functions by stabilizing the protein conformation that binds the tetrahedral intermediate(s) formed during glutamine hydrolysis. Inhibited by the product CTP, via allosteric rather than competitive inhibition. Catalyzes the ATP-dependent amination of UTP to CTP with either L-glutamine or ammonia as the source of nitrogen. Regulates intracellular CTP levels through interactions with the four ribonucleotide triphosphates. This chain is CTP synthase, found in Desulfotalea psychrophila (strain LSv54 / DSM 12343).